A 426-amino-acid chain; its full sequence is Transcriptional enhancer factor TEF-1 (426 aa).

Methionine 1 carries the post-translational modification N-acetylmethionine. Over residues 1 to 12 (MEPSSWSGSESP) the composition is skewed to polar residues. A disordered region spans residues 1-31 (MEPSSWSGSESPAENMERMSDSADKPIDNDA). The residue at position 11 (serine 11) is a Phosphoserine. Positions 15–28 (NMERMSDSADKPID) are enriched in basic and acidic residues. Residues 28–104 (DNDAEGVWSP…QVLARRKSRD (77 aa)) constitute a DNA-binding region (TEA). An N6-lactoyllysine modification is found at lysine 108. The segment at 167–426 (GSSQDVKPFV…QHHIYRLVKD (260 aa)) is transcriptional activation.

Interacts with YAP1 and WWTR1/TAZ. Post-translationally, lactylation by AARS1 promotes nuclear localization and stabilization of YAP1, leading to increased Hippo signaling pathway. Delactylated by SIRT1. Preferentially expressed in skeletal muscle. Lower levels in pancreas, placenta, and heart.

The protein resides in the nucleus. Transcription factor which plays a key role in the Hippo signaling pathway, a pathway involved in organ size control and tumor suppression by restricting proliferation and promoting apoptosis. The core of this pathway is composed of a kinase cascade wherein MST1/MST2, in complex with its regulatory protein SAV1, phosphorylates and activates LATS1/2 in complex with its regulatory protein MOB1, which in turn phosphorylates and inactivates YAP1 oncoprotein and WWTR1/TAZ. Acts by mediating gene expression of YAP1 and WWTR1/TAZ, thereby regulating cell proliferation, migration and epithelial mesenchymal transition (EMT) induction. Binds specifically and cooperatively to the SPH and GT-IIC 'enhansons' (5'-GTGGAATGT-3') and activates transcription in vivo in a cell-specific manner. The activation function appears to be mediated by a limiting cell-specific transcriptional intermediary factor (TIF). Involved in cardiac development. Binds to the M-CAT motif. The protein is Transcriptional enhancer factor TEF-1 (TEAD1) of Homo sapiens (Human).